The primary structure comprises 143 residues: Transthyretin-like protein 33 (143 aa).

The first 20 residues, 1-20 (MSRLACISSLFILCAIGSEA), serve as a signal peptide directing secretion.

It belongs to the nematode transthyretin-like family. As to expression, expressed in head cells next to and anterior of the first pharyngeal bulb, the pharynx, and the hypodermis.

It localises to the secreted. Functionally, protects dopaminergic neurons from degeneration caused by oxidative stress. The sequence is that of Transthyretin-like protein 33 from Caenorhabditis elegans.